We begin with the raw amino-acid sequence, 211 residues long: MNKKKMDLPKCQSITVACEGECSQMYNLHNPLTFEMGLGNIFICVRCFKIHFCNMLEDCNLINTHEGCVCSKTGLFYNGWMPAYSHTCMEPTEEPNMETVNVVVVLLSYVYSFLIQNKARYSNIIRDIIKDGKFIEQVENAVFCTFNKVFKNSTLNKLPLTTVSQLFVQLIIGGHAEGTIYDNNVIRVSRRKREDNILKKMRIEYGNALAL.

The protein belongs to the herpesviridae UL92 family.

The sequence is that of Protein U63 (U63) from Human herpesvirus 7 (strain JI) (HHV-7).